The sequence spans 301 residues: tRNA dimethylallyltransferase (301 aa).

9–16 serves as a coordination point for ATP; it reads GPTASGKS. Substrate is bound at residue 11–16; sequence TASGKS. Residues 34-37 are interaction with substrate tRNA; sequence DSMQ.

Belongs to the IPP transferase family. In terms of assembly, monomer. It depends on Mg(2+) as a cofactor.

It catalyses the reaction adenosine(37) in tRNA + dimethylallyl diphosphate = N(6)-dimethylallyladenosine(37) in tRNA + diphosphate. Catalyzes the transfer of a dimethylallyl group onto the adenine at position 37 in tRNAs that read codons beginning with uridine, leading to the formation of N6-(dimethylallyl)adenosine (i(6)A). The chain is tRNA dimethylallyltransferase from Corynebacterium efficiens (strain DSM 44549 / YS-314 / AJ 12310 / JCM 11189 / NBRC 100395).